Here is a 496-residue protein sequence, read N- to C-terminus: Omega-crystallin (496 aa).

It belongs to the aldehyde dehydrogenase family. As to expression, lens.

Omega-crystallins are structural components of squids and octopi eye lens. Contains relatively little if any DHAL activity. This chain is Omega-crystallin, found in Enteroctopus dofleini (North Pacific giant octopus).